The primary structure comprises 281 residues: Fructose-bisphosphate aldolase class 1 (281 aa).

The active-site Schiff-base intermediate with dihydroxyacetone-P is the Lys-191.

Belongs to the DeoC/FbaB aldolase family. As to quaternary structure, homooctamer.

It localises to the cytoplasm. The enzyme catalyses beta-D-fructose 1,6-bisphosphate = D-glyceraldehyde 3-phosphate + dihydroxyacetone phosphate. Activated by citrate. The polypeptide is Fructose-bisphosphate aldolase class 1 (fba) (Pyrococcus abyssi (strain GE5 / Orsay)).